A 242-amino-acid polypeptide reads, in one-letter code: NAD-dependent protein deacetylase 1 (242 aa).

One can recognise a Deacetylase sirtuin-type domain in the interval 1 to 242; the sequence is MTITSWLAAS…LNEQLAEVDP (242 aa). NAD(+) is bound by residues Ala19, Thr23, Phe30, Arg31, Gln97, Val99, Asp100, and His115. Position 30 (Phe30) interacts with nicotinamide. 2 residues coordinate nicotinamide: Val99 and Asp100. His115 acts as the Proton acceptor in catalysis. Zn(2+) contacts are provided by Cys123, Cys126, Cys142, and Cys144. Positions 182, 183, 207, and 226 each coordinate NAD(+).

It belongs to the sirtuin family. Class U subfamily. The cofactor is Zn(2+).

The protein resides in the cytoplasm. It carries out the reaction N(6)-acetyl-L-lysyl-[protein] + NAD(+) + H2O = 2''-O-acetyl-ADP-D-ribose + nicotinamide + L-lysyl-[protein]. NAD-dependent protein deacetylase which modulates the activities of several enzymes which are inactive in their acetylated form. The protein is NAD-dependent protein deacetylase 1 of Geobacillus kaustophilus (strain HTA426).